A 486-amino-acid polypeptide reads, in one-letter code: Galactose-1-phosphate uridylyltransferase (486 aa).

It belongs to the galactose-1-phosphate uridylyltransferase type 2 family.

Its subcellular location is the cytoplasm. It catalyses the reaction alpha-D-galactose 1-phosphate + UDP-alpha-D-glucose = alpha-D-glucose 1-phosphate + UDP-alpha-D-galactose. It participates in carbohydrate metabolism; galactose metabolism. In Lacticaseibacillus paracasei (strain ATCC 334 / BCRC 17002 / CCUG 31169 / CIP 107868 / KCTC 3260 / NRRL B-441) (Lactobacillus paracasei), this protein is Galactose-1-phosphate uridylyltransferase.